The primary structure comprises 456 residues: Phosphomannomutase (456 aa).

Serine 98 (phosphoserine intermediate) is an active-site residue. Positions 98, 245, 247, and 249 each coordinate Mg(2+).

This sequence belongs to the phosphohexose mutase family. It depends on Mg(2+) as a cofactor.

It catalyses the reaction alpha-D-mannose 1-phosphate = D-mannose 6-phosphate. The protein operates within nucleotide-sugar biosynthesis; GDP-alpha-D-mannose biosynthesis; alpha-D-mannose 1-phosphate from D-fructose 6-phosphate: step 2/2. It participates in bacterial outer membrane biogenesis; LPS O-antigen biosynthesis. Involved in GDP-mannose biosynthesis which serves as the activated sugar nucleotide precursor for mannose residues in cell surface polysaccharides. This enzyme participates in synthesis of the LPS O antigen. The polypeptide is Phosphomannomutase (manB) (Salmonella montevideo).